The sequence spans 487 residues: Glutamyl-tRNA(Gln) amidotransferase subunit A (487 aa).

Residues Lys79 and Ser158 each act as charge relay system in the active site. Ser182 functions as the Acyl-ester intermediate in the catalytic mechanism.

Belongs to the amidase family. GatA subfamily. In terms of assembly, heterotrimer of A, B and C subunits.

It carries out the reaction L-glutamyl-tRNA(Gln) + L-glutamine + ATP + H2O = L-glutaminyl-tRNA(Gln) + L-glutamate + ADP + phosphate + H(+). Functionally, allows the formation of correctly charged Gln-tRNA(Gln) through the transamidation of misacylated Glu-tRNA(Gln) in organisms which lack glutaminyl-tRNA synthetase. The reaction takes place in the presence of glutamine and ATP through an activated gamma-phospho-Glu-tRNA(Gln). This is Glutamyl-tRNA(Gln) amidotransferase subunit A from Ehrlichia ruminantium (strain Gardel).